A 305-amino-acid polypeptide reads, in one-letter code: UDP-3-O-acyl-N-acetylglucosamine deacetylase (305 aa).

Residues His-78, His-235, and Asp-239 each contribute to the Zn(2+) site. The active-site Proton donor is the His-262.

It belongs to the LpxC family. Zn(2+) serves as cofactor.

It carries out the reaction a UDP-3-O-[(3R)-3-hydroxyacyl]-N-acetyl-alpha-D-glucosamine + H2O = a UDP-3-O-[(3R)-3-hydroxyacyl]-alpha-D-glucosamine + acetate. It functions in the pathway glycolipid biosynthesis; lipid IV(A) biosynthesis; lipid IV(A) from (3R)-3-hydroxytetradecanoyl-[acyl-carrier-protein] and UDP-N-acetyl-alpha-D-glucosamine: step 2/6. In terms of biological role, catalyzes the hydrolysis of UDP-3-O-myristoyl-N-acetylglucosamine to form UDP-3-O-myristoylglucosamine and acetate, the committed step in lipid A biosynthesis. This is UDP-3-O-acyl-N-acetylglucosamine deacetylase from Citrifermentans bemidjiense (strain ATCC BAA-1014 / DSM 16622 / JCM 12645 / Bem) (Geobacter bemidjiensis).